A 217-amino-acid chain; its full sequence is Large ribosomal subunit protein uL1 (217 aa).

The protein belongs to the universal ribosomal protein uL1 family. In terms of assembly, part of the 50S ribosomal subunit.

Binds directly to 23S rRNA. Probably involved in E site tRNA release. Functionally, protein L1 is also a translational repressor protein, it controls the translation of its operon by binding to its mRNA. This Hyperthermus butylicus (strain DSM 5456 / JCM 9403 / PLM1-5) protein is Large ribosomal subunit protein uL1.